We begin with the raw amino-acid sequence, 370 residues long: 3-dehydroquinate synthase (370 aa).

Residues 112 to 116 (GVVGD), 136 to 137 (TS), K149, K158, and 176 to 179 (TLRT) contribute to the NAD(+) site. Zn(2+) is bound by residues E191, H254, and H276.

Belongs to the sugar phosphate cyclases superfamily. Dehydroquinate synthase family. It depends on Co(2+) as a cofactor. Zn(2+) is required as a cofactor. NAD(+) serves as cofactor.

Its subcellular location is the cytoplasm. It carries out the reaction 7-phospho-2-dehydro-3-deoxy-D-arabino-heptonate = 3-dehydroquinate + phosphate. The protein operates within metabolic intermediate biosynthesis; chorismate biosynthesis; chorismate from D-erythrose 4-phosphate and phosphoenolpyruvate: step 2/7. In terms of biological role, catalyzes the conversion of 3-deoxy-D-arabino-heptulosonate 7-phosphate (DAHP) to dehydroquinate (DHQ). The sequence is that of 3-dehydroquinate synthase from Xanthomonas oryzae pv. oryzae (strain PXO99A).